The sequence spans 601 residues: MTDTPLSLIRNFSIIAHIDHGKSTLADRLIQACGALTAREMTNQVLDNMELERERGITIKAQTVRLSYPAKDGKTYVLNLMDTPGHVDFAYEVSRSLAACEGSLLVVDASQGVEAQTLANVYQAIDANHEIVPVLNKVDLPAAEPERVKAQIEEVIGIPADDAVEISAKTGLNIEGVLEALVTRLPPPVGDESKPLQALLVDSWYDPYLGVIILVRIKEGRLRKGSRIRMMSNGAVYHVDQVGVFAPRMVPVDDLGPGEMGYINAAIKTVADCNVGDTITDDRHPAERALAGFKPSIPVVWCGLYPIDADDFEKLRDSLSKLRLNDASFHYEAETSAALGFGFRCGFLGLLHLEIIQERLSREFNLDLIATAPSVVYRLYRTNGGMEELHNPADMPDGSVVEKIEEPWITATIMVPDDYLGAVLTLCSERRGIQKDLTYVGTRAMAVYRLPLNEVVFDFYDRLKSVSRGYASFDYQMDGYEESDLVRISILVNQEPVDALAFIAHRSAAESRGRSICAKLKELIPRQLFKIAIQAAIGSRVIARETIGALSKDVTAKCYGGDISRKRKLLEKQKEGKKRMRQFGKVEIPQSAFLAALKMDH.

Residues 7–189 (SLIRNFSIIA…ALVTRLPPPV (183 aa)) enclose the tr-type G domain. GTP contacts are provided by residues 19–24 (DHGKST) and 136–139 (NKVD).

The protein belongs to the TRAFAC class translation factor GTPase superfamily. Classic translation factor GTPase family. LepA subfamily.

It localises to the cell inner membrane. It catalyses the reaction GTP + H2O = GDP + phosphate + H(+). Functionally, required for accurate and efficient protein synthesis under certain stress conditions. May act as a fidelity factor of the translation reaction, by catalyzing a one-codon backward translocation of tRNAs on improperly translocated ribosomes. Back-translocation proceeds from a post-translocation (POST) complex to a pre-translocation (PRE) complex, thus giving elongation factor G a second chance to translocate the tRNAs correctly. Binds to ribosomes in a GTP-dependent manner. The polypeptide is Elongation factor 4 (Gluconacetobacter diazotrophicus (strain ATCC 49037 / DSM 5601 / CCUG 37298 / CIP 103539 / LMG 7603 / PAl5)).